A 255-amino-acid polypeptide reads, in one-letter code: Small ribosomal subunit protein eS1 (255 aa).

Residues 1-18 (MAVGKNKRLSKGKKGLKK) show a composition bias toward basic residues. The tract at residues 1-28 (MAVGKNKRLSKGKKGLKKRTQDPFSRKD) is disordered. Ala2 bears the N-acetylalanine; partial mark. The segment covering 19-28 (RTQDPFSRKD) has biased composition (basic and acidic residues).

It belongs to the eukaryotic ribosomal protein eS1 family. Component of the small ribosomal subunit. Mature ribosomes consist of a small (40S) and a large (60S) subunit. The 40S subunit contains about 33 different proteins and 1 molecule of RNA (18S). The 60S subunit contains about 49 different proteins and 3 molecules of RNA (25S, 5.8S and 5S).

The protein resides in the cytoplasm. This Ajellomyces capsulatus (strain H143) (Darling's disease fungus) protein is Small ribosomal subunit protein eS1.